We begin with the raw amino-acid sequence, 342 residues long: Succinylglutamate desuccinylase (342 aa).

The Zn(2+) site is built by histidine 63, glutamate 66, and histidine 155. The active site involves glutamate 219.

It belongs to the AspA/AstE family. Succinylglutamate desuccinylase subfamily. It depends on Zn(2+) as a cofactor.

The enzyme catalyses N-succinyl-L-glutamate + H2O = L-glutamate + succinate. The protein operates within amino-acid degradation; L-arginine degradation via AST pathway; L-glutamate and succinate from L-arginine: step 5/5. Its function is as follows. Transforms N(2)-succinylglutamate into succinate and glutamate. This Vibrio cholerae serotype O1 (strain ATCC 39541 / Classical Ogawa 395 / O395) protein is Succinylglutamate desuccinylase.